The sequence spans 547 residues: Chaperonin GroEL (547 aa).

ATP is bound by residues 30–33 (TLGP), Lys-51, 87–91 (DGTTT), Gly-415, 479–481 (NAA), and Asp-495.

It belongs to the chaperonin (HSP60) family. Forms a cylinder of 14 subunits composed of two heptameric rings stacked back-to-back. Interacts with the co-chaperonin GroES.

It is found in the cytoplasm. The catalysed reaction is ATP + H2O + a folded polypeptide = ADP + phosphate + an unfolded polypeptide.. Its function is as follows. Together with its co-chaperonin GroES, plays an essential role in assisting protein folding. The GroEL-GroES system forms a nano-cage that allows encapsulation of the non-native substrate proteins and provides a physical environment optimized to promote and accelerate protein folding. The sequence is that of Chaperonin GroEL from Bordetella pertussis (strain Tohama I / ATCC BAA-589 / NCTC 13251).